The chain runs to 265 residues: Eukaryotic translation initiation factor 3 subunit J (265 aa).

A disordered region spans residues 1-71; it reads MSWDDEAING…KESSADRALL (71 aa). A compositionally biased stretch (acidic residues) spans 23 to 32; it reads WDAEIGDDEP. Over residues 42 to 71 the composition is skewed to basic and acidic residues; sequence EEKKPAPKPKKEQPKKVKKGKESSADRALL. Serine 65 is modified (phosphoserine). A Phosphothreonine modification is found at threonine 75. Serine 92 carries the phosphoserine modification. The disordered stretch occupies residues 219 to 265; the sequence is VRGGTATGGAGKKKVKGKTNLGGAFKKDQDFDLDGPDDFEFGDDDFM. The residue at position 220 (arginine 220) is an Omega-N-methylarginine. Acidic residues predominate over residues 249-265; sequence FDLDGPDDFEFGDDDFM.

This sequence belongs to the eIF-3 subunit J family. As to quaternary structure, probable component of the eukaryotic translation initiation factor 3 (eIF-3) complex. Is not part of the eIF-3 core complex, with which it is associated in substochiometric amounts.

It is found in the cytoplasm. In terms of biological role, component of the eukaryotic translation initiation factor 3 (eIF-3) complex, which is involved in protein synthesis of a specialized repertoire of mRNAs and, together with other initiation factors, stimulates binding of mRNA and methionyl-tRNAi to the 40S ribosome. The eIF-3 complex specifically targets and initiates translation of a subset of mRNAs involved in cell proliferation. The polypeptide is Eukaryotic translation initiation factor 3 subunit J (Saccharomyces cerevisiae (strain ATCC 204508 / S288c) (Baker's yeast)).